The primary structure comprises 158 residues: 2-C-methyl-D-erythritol 2,4-cyclodiphosphate synthase (158 aa).

Asp8 and His10 together coordinate a divalent metal cation. 4-CDP-2-C-methyl-D-erythritol 2-phosphate-binding positions include 8-10 (DSH) and 34-35 (HS). His42 is a binding site for a divalent metal cation. Residues 56–58 (DIG), 61–65 (FPDND), and Arg142 each bind 4-CDP-2-C-methyl-D-erythritol 2-phosphate.

Belongs to the IspF family. In terms of assembly, homotrimer. It depends on a divalent metal cation as a cofactor.

It catalyses the reaction 4-CDP-2-C-methyl-D-erythritol 2-phosphate = 2-C-methyl-D-erythritol 2,4-cyclic diphosphate + CMP. Its pathway is isoprenoid biosynthesis; isopentenyl diphosphate biosynthesis via DXP pathway; isopentenyl diphosphate from 1-deoxy-D-xylulose 5-phosphate: step 4/6. Functionally, involved in the biosynthesis of isopentenyl diphosphate (IPP) and dimethylallyl diphosphate (DMAPP), two major building blocks of isoprenoid compounds. Catalyzes the conversion of 4-diphosphocytidyl-2-C-methyl-D-erythritol 2-phosphate (CDP-ME2P) to 2-C-methyl-D-erythritol 2,4-cyclodiphosphate (ME-CPP) with a corresponding release of cytidine 5-monophosphate (CMP). The chain is 2-C-methyl-D-erythritol 2,4-cyclodiphosphate synthase from Brachyspira hyodysenteriae (strain ATCC 49526 / WA1).